The sequence spans 356 residues: Protein-arginine kinase (356 aa).

In terms of domain architecture, Phosphagen kinase C-terminal spans 22–249 (FRPISTLSLS…SKILSAETEA (228 aa)). ATP-binding positions include 25–29 (ISTLS), 172–176 (VARAF), and 202–207 (SSLLPL).

This sequence belongs to the ATP:guanido phosphotransferase family.

The catalysed reaction is L-arginyl-[protein] + ATP = N(omega)-phospho-L-arginyl-[protein] + ADP + H(+). Catalyzes the specific phosphorylation of arginine residues in proteins. The polypeptide is Protein-arginine kinase (Chlamydia muridarum (strain MoPn / Nigg)).